The sequence spans 209 residues: Lectin (209 aa).

Homodimer; non-covalently linked.

Binds chito-oligosaccherides. Has hemagglutinating activity towards rabbit erythrocytes. This chain is Lectin, found in Luffa acutangula (Ridged gourd).